Here is a 190-residue protein sequence, read N- to C-terminus: Transcription termination/antitermination protein NusG (190 aa).

The KOW domain maps to 138–166 (VGEIVTVTEGPFETFTGTVEEVDQEKARL).

It belongs to the NusG family.

Functionally, participates in transcription elongation, termination and antitermination. In Rickettsia bellii (strain RML369-C), this protein is Transcription termination/antitermination protein NusG.